Here is a 575-residue protein sequence, read N- to C-terminus: Adenine deaminase (575 aa).

It belongs to the metallo-dependent hydrolases superfamily. Adenine deaminase family. Mn(2+) is required as a cofactor.

It catalyses the reaction adenine + H2O + H(+) = hypoxanthine + NH4(+). The sequence is that of Adenine deaminase from Nitratidesulfovibrio vulgaris (strain ATCC 29579 / DSM 644 / CCUG 34227 / NCIMB 8303 / VKM B-1760 / Hildenborough) (Desulfovibrio vulgaris).